Reading from the N-terminus, the 424-residue chain is MAKNIQAIRGMNDYLPGETAIWQRIEGTLKNVLGSYGYSEIRLPIVEQTPLFKRAIGEVTDVVEKEMYTFEDRNGDSLTLRPEGTAGCVRAGIEHGLLYNQEQRLWYIGPMFRHERPQKGRYRQFHQLGCEVFGLQGPDIDAELIMLTARWWRALGISEHVTLELNSIGSLEARANYRDALVAFLEQHKEKLDEDCKRRMYTNPLRVLDSKNPEVQVLLNDAPALGDYLDEESREHFAGLCKLLESAGIAYTVNQRLVRGLDYYNRTVFEWVTNSLGSQGTVCAGGRYDGLVEQLGGRATPAVGFAMGLERLVLLVQAVNPEFKADPVVDIYLVASGADTQSAAMALAERLRDELPGVKLMTNHGGGNFKKQFARADKWGARVAVVLGESEVANGTAVVKDLRSGEQTAVAQDSVAAHLRTLLG.

Belongs to the class-II aminoacyl-tRNA synthetase family. As to quaternary structure, homodimer.

Its subcellular location is the cytoplasm. It catalyses the reaction tRNA(His) + L-histidine + ATP = L-histidyl-tRNA(His) + AMP + diphosphate + H(+). The chain is Histidine--tRNA ligase from Escherichia coli O127:H6 (strain E2348/69 / EPEC).